The chain runs to 1031 residues: Telomerase reverse transcriptase (1031 aa).

The region spanning 498–852 is the Reverse transcriptase domain; that stretch reads KEVEEWKKSL…DYCDWIGISI (355 aa). The Mg(2+) site is built by aspartate 603, aspartate 781, and aspartate 782.

It belongs to the reverse transcriptase family. Telomerase subfamily. As to quaternary structure, component of the telomerase holoenzyme complex composed minimally of the catalytic subunit p123 and the telomerase RNA template component.

Its subcellular location is the nucleus. The protein localises to the chromosome. It is found in the telomere. The enzyme catalyses DNA(n) + a 2'-deoxyribonucleoside 5'-triphosphate = DNA(n+1) + diphosphate. In terms of biological role, telomerase is a ribonucleoprotein enzyme essential for the replication of chromosome termini in most eukaryotes. It elongates telomeres. It is a reverse transcriptase that adds simple sequence repeats to chromosome ends by copying a template sequence within the RNA component of the enzyme. The protein is Telomerase reverse transcriptase of Euplotes aediculatus (Ciliate).